We begin with the raw amino-acid sequence, 395 residues long: L-methionine gamma-lyase (395 aa).

Pyridoxal 5'-phosphate is bound by residues 56 to 58 (YTR) and 86 to 87 (GM). Y111 is a substrate binding site. Residue 206–208 (SAT) coordinates pyridoxal 5'-phosphate. N6-(pyridoxal phosphate)lysine is present on K209. Position 373 (R373) interacts with substrate.

It belongs to the trans-sulfuration enzymes family. L-methionine gamma-lyase subfamily. In terms of assembly, homotetramer. Requires pyridoxal 5'-phosphate as cofactor.

The catalysed reaction is L-methionine + H2O = methanethiol + 2-oxobutanoate + NH4(+). It catalyses the reaction L-homocysteine + H2O = 2-oxobutanoate + hydrogen sulfide + NH4(+) + H(+). The enzyme catalyses L-cysteine + H2O = hydrogen sulfide + pyruvate + NH4(+) + H(+). In terms of biological role, catalyzes the alpha,gamma-elimination of L-methionine to produce methanethiol, 2-oxobutanoate and ammonia, and that of L-homocysteine. Can also use L-cysteine as substrate, catalyzing its alpha,beta-elimination; this activity seems to only minimally contribute to the production of hydrogen sulfide (H2S) by F.nucleatum in the oral cavity, which is toxic for a large variety of cells in periodontal regions. The sequence is that of L-methionine gamma-lyase from Fusobacterium nucleatum subsp. nucleatum (strain ATCC 25586 / DSM 15643 / BCRC 10681 / CIP 101130 / JCM 8532 / KCTC 2640 / LMG 13131 / VPI 4355).